The primary structure comprises 191 residues: GTP cyclohydrolase 1 (191 aa).

The Zn(2+) site is built by Cys-80, His-83, and Cys-151.

Belongs to the GTP cyclohydrolase I family. In terms of assembly, toroid-shaped homodecamer, composed of two pentamers of five dimers.

It carries out the reaction GTP + H2O = 7,8-dihydroneopterin 3'-triphosphate + formate + H(+). It participates in cofactor biosynthesis; 7,8-dihydroneopterin triphosphate biosynthesis; 7,8-dihydroneopterin triphosphate from GTP: step 1/1. This Leifsonia xyli subsp. xyli (strain CTCB07) protein is GTP cyclohydrolase 1.